Reading from the N-terminus, the 471-residue chain is Uronate isomerase (471 aa).

Belongs to the metallo-dependent hydrolases superfamily. Uronate isomerase family.

It carries out the reaction D-glucuronate = D-fructuronate. It catalyses the reaction aldehydo-D-galacturonate = keto-D-tagaturonate. It participates in carbohydrate metabolism; pentose and glucuronate interconversion. The protein is Uronate isomerase of Latilactobacillus sakei subsp. sakei (strain 23K) (Lactobacillus sakei subsp. sakei).